Consider the following 451-residue polypeptide: Phosphoglucosamine mutase (451 aa).

S104 acts as the Phosphoserine intermediate in catalysis. Residues S104, D242, D244, and D246 each coordinate Mg(2+). Residue S104 is modified to Phosphoserine.

The protein belongs to the phosphohexose mutase family. Mg(2+) serves as cofactor. Activated by phosphorylation.

The enzyme catalyses alpha-D-glucosamine 1-phosphate = D-glucosamine 6-phosphate. Functionally, catalyzes the conversion of glucosamine-6-phosphate to glucosamine-1-phosphate. This Kocuria rhizophila (strain ATCC 9341 / DSM 348 / NBRC 103217 / DC2201) protein is Phosphoglucosamine mutase.